The chain runs to 324 residues: Beta-ketoacyl-[acyl-carrier-protein] synthase III (324 aa).

Residues Cys114 and His246 contribute to the active site. An ACP-binding region spans residues 247–251 (QANLR). Residue Asn276 is part of the active site.

This sequence belongs to the thiolase-like superfamily. FabH family. In terms of assembly, homodimer.

The protein resides in the cytoplasm. It carries out the reaction malonyl-[ACP] + acetyl-CoA + H(+) = 3-oxobutanoyl-[ACP] + CO2 + CoA. It functions in the pathway lipid metabolism; fatty acid biosynthesis. Its function is as follows. Catalyzes the condensation reaction of fatty acid synthesis by the addition to an acyl acceptor of two carbons from malonyl-ACP. Catalyzes the first condensation reaction which initiates fatty acid synthesis and may therefore play a role in governing the total rate of fatty acid production. Possesses both acetoacetyl-ACP synthase and acetyl transacylase activities. Its substrate specificity determines the biosynthesis of branched-chain and/or straight-chain of fatty acids. This is Beta-ketoacyl-[acyl-carrier-protein] synthase III from Campylobacter jejuni (strain RM1221).